A 239-amino-acid polypeptide reads, in one-letter code: Probable transcriptional regulatory protein ACL_0044 (239 aa).

This sequence belongs to the TACO1 family.

Its subcellular location is the cytoplasm. The protein is Probable transcriptional regulatory protein ACL_0044 of Acholeplasma laidlawii (strain PG-8A).